The sequence spans 351 residues: MNDTIASTVRLTQYSHGAGCGCKISPKVLEKILHSDMEKWVDPHLLVGNETKDDAAVYDIGNGIGIISTTDFFMPIVDDPFDFGRIAATNAISDIFAMGGKPIMAIAILGFPIKLLPPEVAQRIVDGGRFACRQAGITLAGGHSIDAPEPIFGLAVTGIINTDKVKKNASATAGCKLFLTKPLGIGVLTTAEKKGKLKAEHQGLATEVMCQMNTIGAKFAEIAGISAMTDVTGFGLLGHLSELCEGSGVRAEVYFDKIKTLDGVQRYIEKGCIPGGTERNFESYGHKIGAMSDLQKAILCDPQTSGGLLIAVDADSEQQVLEIAADDSIELFEVGRLFAKEHDSPILITVL.

Cysteine 20 is a catalytic residue. Residues lysine 23 and 51–53 (TKD) contribute to the ATP site. Aspartate 54 provides a ligand contact to Mg(2+). Residues aspartate 71, aspartate 94, and 142-144 (GHS) each bind ATP. A Mg(2+)-binding site is contributed by aspartate 94. Residue aspartate 230 coordinates Mg(2+).

This sequence belongs to the selenophosphate synthase 1 family. Class I subfamily. As to quaternary structure, homodimer. Mg(2+) is required as a cofactor.

The enzyme catalyses hydrogenselenide + ATP + H2O = selenophosphate + AMP + phosphate + 2 H(+). In terms of biological role, synthesizes selenophosphate from selenide and ATP. This chain is Selenide, water dikinase, found in Pasteurella multocida (strain Pm70).